Reading from the N-terminus, the 187-residue chain is ATP synthase subunit b 2 (187 aa).

The chain crosses the membrane as a helical span at residues 39–61 (SQLVWLVLSFAALYLLMSRVALP).

It belongs to the ATPase B chain family. F-type ATPases have 2 components, F(1) - the catalytic core - and F(0) - the membrane proton channel. F(1) has five subunits: alpha(3), beta(3), gamma(1), delta(1), epsilon(1). F(0) has three main subunits: a(1), b(2) and c(10-14). The alpha and beta chains form an alternating ring which encloses part of the gamma chain. F(1) is attached to F(0) by a central stalk formed by the gamma and epsilon chains, while a peripheral stalk is formed by the delta and b chains.

Its subcellular location is the cell inner membrane. F(1)F(0) ATP synthase produces ATP from ADP in the presence of a proton or sodium gradient. F-type ATPases consist of two structural domains, F(1) containing the extramembraneous catalytic core and F(0) containing the membrane proton channel, linked together by a central stalk and a peripheral stalk. During catalysis, ATP synthesis in the catalytic domain of F(1) is coupled via a rotary mechanism of the central stalk subunits to proton translocation. In terms of biological role, component of the F(0) channel, it forms part of the peripheral stalk, linking F(1) to F(0). This Parvibaculum lavamentivorans (strain DS-1 / DSM 13023 / NCIMB 13966) protein is ATP synthase subunit b 2.